Reading from the N-terminus, the 113-residue chain is UPF0122 protein Lreu_1156 (113 aa).

The protein belongs to the UPF0122 family.

Its function is as follows. Might take part in the signal recognition particle (SRP) pathway. This is inferred from the conservation of its genetic proximity to ftsY/ffh. May be a regulatory protein. This Limosilactobacillus reuteri (strain DSM 20016) (Lactobacillus reuteri) protein is UPF0122 protein Lreu_1156.